The sequence spans 139 residues: S-protein homolog 14 (139 aa).

Positions 1–20 (MNRFIIFMFVVVTYFGLNVA) are cleaved as a signal peptide. An N-linked (GlcNAc...) asparagine glycan is attached at Asn136.

The protein belongs to the plant self-incompatibility (S1) protein family.

It localises to the secreted. The chain is S-protein homolog 14 from Arabidopsis thaliana (Mouse-ear cress).